We begin with the raw amino-acid sequence, 413 residues long: Calsequestrin-2 (413 aa).

The signal sequence occupies residues 1–19 (MKRIYLLVVGLYLLSFSRA). Tyrosine 282 carries the post-translational modification Phosphotyrosine. Asparagine 335 is a glycosylation site (N-linked (GlcNAc...) asparagine). A disordered region spans residues 365–413 (VLSGKINTEDDDNEDEDDDGDNDNDDDDDDDDNSDEDNDDSDDDDDDDE). Over residues 373–413 (EDDDNEDEDDDGDNDNDDDDDDDDNSDEDNDDSDDDDDDDE) the composition is skewed to acidic residues. 2 positions are modified to phosphoserine: serine 398 and serine 405.

It belongs to the calsequestrin family. In terms of assembly, monomer, homodimer and homooligomer. Mostly monomeric in the absence of calcium. Forms higher oligomers in a calcium-dependent manner. Dimers associate to form tetramers, that then form linear homomer chains. Interacts with ASPH and TRDN. In terms of processing, phosphorylation in the C-terminus, probably by CK2, moderately increases calcium buffering capacity. Post-translationally, N-glycosylated. In terms of tissue distribution, detected in stomach and vas deferens (at protein level).

Its subcellular location is the sarcoplasmic reticulum lumen. Its function is as follows. Calsequestrin is a high-capacity, moderate affinity, calcium-binding protein and thus acts as an internal calcium store in muscle. Calcium ions are bound by clusters of acidic residues at the protein surface, especially at the interface between subunits. Can bind around 60 Ca(2+) ions. Regulates the release of lumenal Ca(2+) via the calcium release channel RYR2; this plays an important role in triggering muscle contraction. Plays a role in excitation-contraction coupling in the heart and in regulating the rate of heart beats. This chain is Calsequestrin-2 (Casq2), found in Rattus norvegicus (Rat).